Reading from the N-terminus, the 227-residue chain is GFP-like non-fluorescent chromoprotein (227 aa).

Positions 63–65 (AYG) form a cross-link, 5-imidazolinone (Ala-Gly). Position 64 is a 2,3-didehydrotyrosine (Tyr64).

It belongs to the GFP family. As to quaternary structure, homotetramer. Contains a chromophore consisting of modified amino acid residues. The chromophore is formed by autocatalytic backbone condensation between Xaa-N and Gly-(N+2), and oxidation of Tyr-(N+1) to didehydrotyrosine. Maturation of the chromophore requires nothing other than molecular oxygen. The precise stereochemistry of the tyrosine has not been determined.

Functionally, non-fluorescent pigment protein that is mauve in color. The wild-type form is non-fluorescent. The polypeptide is GFP-like non-fluorescent chromoprotein (Condylactis gigantea (Giant Caribbean anemone)).